Consider the following 693-residue polypeptide: Phenoloxidase subunit 2 (693 aa).

A propeptide spanning residues 1–51 (MADVFESLELLFDRPNEPLITPKGENNSVFQLTEQFLTEDYANNGIELNNR) is cleaved from the precursor. N-linked (GlcNAc...) asparagine glycans are attached at residues Asn26 and Asn64. His213, His217, and His243 together coordinate Cu cation. The active-site Proton acceptor is the Glu351. 3 residues coordinate Cu cation: His366, His370, and His406. 2 N-linked (GlcNAc...) asparagine glycosylation sites follow: Asn462 and Asn494. 2 disulfides stabilise this stretch: Cys583–Cys627 and Cys585–Cys634. An N-linked (GlcNAc...) asparagine glycan is attached at Asn680.

As to quaternary structure, heterodimer. Requires Cu(2+) as cofactor. Post-translationally, the N-terminus is blocked. In terms of tissue distribution, synthesized by hemocytes and released into the hemolymph plasma.

The protein resides in the secreted. It carries out the reaction 2 L-dopa + O2 = 2 L-dopaquinone + 2 H2O. The catalysed reaction is L-tyrosine + O2 = L-dopaquinone + H2O. In terms of biological role, this is a copper-containing oxidase that functions in the formation of pigments such as melanins and other polyphenolic compounds. Catalyzes the rate-limiting conversions of tyrosine to DOPA, DOPA to DOPA-quinone and possibly 5,6 dihydroxyindole to indole-5'6 quinone. This is Phenoloxidase subunit 2 from Bombyx mori (Silk moth).